A 266-amino-acid polypeptide reads, in one-letter code: Tryptophan synthase alpha chain (266 aa).

Catalysis depends on proton acceptor residues Glu49 and Asp60.

This sequence belongs to the TrpA family. Tetramer of two alpha and two beta chains.

It carries out the reaction (1S,2R)-1-C-(indol-3-yl)glycerol 3-phosphate + L-serine = D-glyceraldehyde 3-phosphate + L-tryptophan + H2O. The protein operates within amino-acid biosynthesis; L-tryptophan biosynthesis; L-tryptophan from chorismate: step 5/5. Functionally, the alpha subunit is responsible for the aldol cleavage of indoleglycerol phosphate to indole and glyceraldehyde 3-phosphate. The polypeptide is Tryptophan synthase alpha chain (Chloroflexus aurantiacus (strain ATCC 29364 / DSM 637 / Y-400-fl)).